Consider the following 360-residue polypeptide: 3-dehydroquinate synthase (360 aa).

NAD(+) contacts are provided by residues 69 to 74, 103 to 107, 127 to 128, Lys140, Lys149, and 167 to 170; these read DGEKYK, GVVGD, TT, and TLDT. Zn(2+) contacts are provided by Glu182, His246, and His263.

The protein belongs to the sugar phosphate cyclases superfamily. Dehydroquinate synthase family. Co(2+) is required as a cofactor. It depends on Zn(2+) as a cofactor. NAD(+) serves as cofactor.

It is found in the cytoplasm. It catalyses the reaction 7-phospho-2-dehydro-3-deoxy-D-arabino-heptonate = 3-dehydroquinate + phosphate. The protein operates within metabolic intermediate biosynthesis; chorismate biosynthesis; chorismate from D-erythrose 4-phosphate and phosphoenolpyruvate: step 2/7. Its function is as follows. Catalyzes the conversion of 3-deoxy-D-arabino-heptulosonate 7-phosphate (DAHP) to dehydroquinate (DHQ). This is 3-dehydroquinate synthase from Vesicomyosocius okutanii subsp. Calyptogena okutanii (strain HA).